Consider the following 179-residue polypeptide: Large ribosomal subunit protein uL6 (179 aa).

The protein belongs to the universal ribosomal protein uL6 family. As to quaternary structure, part of the 50S ribosomal subunit.

In terms of biological role, this protein binds to the 23S rRNA, and is important in its secondary structure. It is located near the subunit interface in the base of the L7/L12 stalk, and near the tRNA binding site of the peptidyltransferase center. This Chloroherpeton thalassium (strain ATCC 35110 / GB-78) protein is Large ribosomal subunit protein uL6.